The following is an 875-amino-acid chain: Lysine-specific demethylase 7A (875 aa).

A PHD-type zinc finger spans residues 5-56 (PLYCVCRQPYDVNRFMIECDICKDWFHGSCVQVVEHHAADIDVYHCPNCEPI). One can recognise a JmjC domain in the interval 197–353 (FSDTRMSNLV…MQLRCYEMER (157 aa)). Thr246 lines the substrate pocket. Fe cation-binding residues include His249 and Asp251. Lys266 serves as a coordination point for substrate. His321 lines the Fe cation pocket. Disordered stretches follow at residues 442 to 506 (EDDS…SRKL), 629 to 710 (SQGE…NTDC), and 742 to 820 (QGNG…ATAK). The segment covering 448-462 (AVKTQGSAECSLSRS) has biased composition (polar residues). Residues 478 to 505 (QDHHHHRRRHHHHHHHHHHHHHHHHSRK) show a composition bias toward basic residues. Residues 650-663 (SDSKAGDSAEKCSL) show a composition bias toward basic and acidic residues. The span at 688-697 (SHRHSHHKQA) shows a compositional bias: basic residues. Low complexity predominate over residues 742–762 (QGNGSSTSSSSDMWDSSEPCS).

The protein belongs to the JHDM1 histone demethylase family. JHDM1D subfamily. It depends on Fe(2+) as a cofactor. In terms of tissue distribution, predominantly expressed in brain.

The protein localises to the nucleus. In terms of biological role, histone demethylase required for brain development. Specifically demethylates dimethylated 'Lys-9' and 'Lys-27' (H3K9me2 and H3K27me2, respectively) of histone H3 and monomethylated histone H4 'Lys-20' residue (H4K20Me1), thereby playing a central role in histone code. The sequence is that of Lysine-specific demethylase 7A (kdm7a) from Danio rerio (Zebrafish).